We begin with the raw amino-acid sequence, 399 residues long: Unsaturated chondroitin disaccharide hydrolase (399 aa).

Catalysis depends on aspartate 116, which acts as the Nucleophile. Substrate is bound by residues aspartate 116, aspartate 176, glycine 234, threonine 236, arginine 248, tryptophan 252, serine 366, and serine 369. Aspartate 176 acts as the Proton donor in catalysis.

The protein belongs to the glycosyl hydrolase 88 family. As to quaternary structure, monomer.

The enzyme catalyses beta-D-4-deoxy-Delta(4)-GlcpA-(1-&gt;3)-beta-D-GalpNAc6S + H2O = N-acetyl-beta-D-galactosamine 6-sulfate + 5-dehydro-4-deoxy-D-glucuronate. In terms of biological role, catalyzes the hydrolysis of unsaturated hyaluronate and chondroitin disaccharides. Also degrades unsaturated heparin disaccharides. Releases 4-deoxy-4,5-didehydro D-glucuronic acid or 4-deoxy-4,5-didehydro L-iduronic acid from chondroitin disaccharides, hyaluronan disaccharides and heparin disaccharides and cleaves both glycosidic (1-&gt;3) and (1-&gt;4) bonds. Prefers sulfated glycosaminoglycans compared to unsulfated glycosaminoglycans. Probably required for mammalian cells invasion through the degradation of extracellular sulfated glycosaminoglycans such as chondroitin and hyaluronan. In Streptococcus pyogenes serotype M1, this protein is Unsaturated chondroitin disaccharide hydrolase (ugl).